A 176-amino-acid chain; its full sequence is Ribosome rescue factor SmrB (176 aa).

The region spanning 98-173 (LDLHGLTQKQ…GTAALLVLVE (76 aa)) is the Smr domain.

It belongs to the SmrB family. As to quaternary structure, associates with collided ribosomes, but not with correctly translating polysomes.

Its function is as follows. Acts as a ribosome collision sensor. Detects stalled/collided disomes (pairs of ribosomes where the leading ribosome is stalled and a second ribosome has collided with it) and endonucleolytically cleaves mRNA at the 5' boundary of the stalled ribosome. Stalled/collided disomes form a new interface (primarily via the 30S subunits) that binds SmrB. Cleaved mRNA becomes available for tmRNA ligation, leading to ribosomal subunit dissociation and rescue of stalled ribosomes. The sequence is that of Ribosome rescue factor SmrB from Yersinia enterocolitica serotype O:8 / biotype 1B (strain NCTC 13174 / 8081).